The primary structure comprises 299 residues: Very long chain fatty acid elongase 5 (299 aa).

N-acetylmethionine is present on Met-1. Transmembrane regions (helical) follow at residues 26 to 46 (WFLLDNYIPTFVCSAIYLLIV), 64 to 84 (ILVVYNLGLTLLSLYMFYELV), 112 to 132 (VLWWYYFSKLIEFMDTFFFIL), 139 to 158 (ITVLHVYHHATMLNIWWFVM), 168 to 187 (FGATLNSFIHVLMYSYYGLS), 205 to 225 (GQLVQFVLTIIQTSCGVIWPC), and 227 to 247 (FPLGWLYFQIGYMISLIALFT).

It belongs to the ELO family. ELOVL5 subfamily. Interacts with TECR. In terms of tissue distribution, highly expressed in lung and brain.

It localises to the endoplasmic reticulum membrane. The protein resides in the cell projection. Its subcellular location is the dendrite. The catalysed reaction is a very-long-chain acyl-CoA + malonyl-CoA + H(+) = a very-long-chain 3-oxoacyl-CoA + CO2 + CoA. The enzyme catalyses (6Z,9Z,12Z,15Z)-octadecatetraenoyl-CoA + malonyl-CoA + H(+) = (8Z,11Z,14Z,17Z)-3-oxoicosatetraenoyl-CoA + CO2 + CoA. It carries out the reaction (6Z,9Z,12Z)-octadecatrienoyl-CoA + malonyl-CoA + H(+) = (8Z,11Z,14Z)-3-oxoeicosatrienoyl-CoA + CO2 + CoA. It catalyses the reaction (5Z,8Z,11Z,14Z,17Z)-eicosapentaenoyl-CoA + malonyl-CoA + H(+) = 3-oxo-(7Z,10Z,13Z,16Z,19Z)-docosapentaenoyl-CoA + CO2 + CoA. The catalysed reaction is (5Z,8Z,11Z,14Z)-eicosatetraenoyl-CoA + malonyl-CoA + H(+) = (7Z,10Z,13Z,16Z)-3-oxodocosatetraenoyl-CoA + CO2 + CoA. The enzyme catalyses (9Z,12Z,15Z)-octadecatrienoyl-CoA + malonyl-CoA + H(+) = (11Z,14Z,17Z)-3-oxoeicosatrienoyl-CoA + CO2 + CoA. It carries out the reaction (9Z)-hexadecenoyl-CoA + malonyl-CoA + H(+) = 3-oxo-(11Z)-octadecenoyl-CoA + CO2 + CoA. It catalyses the reaction (9Z)-octadecenoyl-CoA + malonyl-CoA + H(+) = 3-oxo-(11Z)-eicosenoyl-CoA + CO2 + CoA. The catalysed reaction is (11Z)-octadecenoyl-CoA + malonyl-CoA + H(+) = 3-oxo-(13Z)-eicosenoyl-CoA + CO2 + CoA. The enzyme catalyses (9Z,12Z)-octadecadienoyl-CoA + malonyl-CoA + H(+) = (11Z,14Z)-3-oxoicosa-11,14-dienoyl-CoA + CO2 + CoA. Its pathway is lipid metabolism; polyunsaturated fatty acid biosynthesis. Catalyzes the first and rate-limiting reaction of the four reactions that constitute the long-chain fatty acids elongation cycle. This endoplasmic reticulum-bound enzymatic process allows the addition of 2 carbons to the chain of long- and very long-chain fatty acids (VLCFAs) per cycle. Condensing enzyme that acts specifically toward polyunsaturated acyl-CoA with the higher activity toward C18:3(n-6) acyl-CoA. May participate in the production of monounsaturated and of polyunsaturated VLCFAs of different chain lengths that are involved in multiple biological processes as precursors of membrane lipids and lipid mediators. In conditions where the essential linoleic and alpha linoleic fatty acids are lacking it is also involved in the synthesis of Mead acid from oleic acid. This chain is Very long chain fatty acid elongase 5, found in Rattus norvegicus (Rat).